Consider the following 718-residue polypeptide: Homeobox-leucine zipper protein HDG9 (718 aa).

Residues 1–12 (MDFTRDDNSSDE) are compositionally biased toward basic and acidic residues. Residues 1–35 (MDFTRDDNSSDERENDVDANTNNRHEKKGYHRHTN) form a disordered region. The homeobox DNA-binding region spans 26–85 (EKKGYHRHTNEQIHRLETYFKECPHPDEFQRRLLGEELNLKPKQIKFWFQNKRTQAKSHN). Residues 78–152 (RTQAKSHNEK…LKDEYERVSN (75 aa)) are a coiled coil. The tract at residues 169–209 (PYLHGPSNHASTSKNRPALYGTSSNRLPEPSSIFRGPYTRG) is disordered. Residues 176-194 (NHASTSKNRPALYGTSSNR) are compositionally biased toward polar residues. One can recognise an START domain in the interval 232-464 (SQLEKIAMLE…LERTCERLIF (233 aa)).

This sequence belongs to the HD-ZIP homeobox family. Class IV subfamily. Expressed in anthers with highest levels in the tapetum and pollen grains, and chalazal end of the embryo sac.

It is found in the nucleus. Probable transcription factor that binds to the DNA sequence 5'-GCATTAAATGCGCA-3'. The sequence is that of Homeobox-leucine zipper protein HDG9 (HDG9) from Arabidopsis thaliana (Mouse-ear cress).